The chain runs to 274 residues: Large ribosomal subunit protein uL2 (274 aa).

Positions 223 to 265 (VVMNPVDHPHGGGEGRTSGGRHPVSPWGVPTKGYKTRSNKRTD) are disordered.

This sequence belongs to the universal ribosomal protein uL2 family. As to quaternary structure, part of the 50S ribosomal subunit. Forms a bridge to the 30S subunit in the 70S ribosome.

Its function is as follows. One of the primary rRNA binding proteins. Required for association of the 30S and 50S subunits to form the 70S ribosome, for tRNA binding and peptide bond formation. It has been suggested to have peptidyltransferase activity; this is somewhat controversial. Makes several contacts with the 16S rRNA in the 70S ribosome. This chain is Large ribosomal subunit protein uL2, found in Vibrio vulnificus (strain CMCP6).